The following is a 161-amino-acid chain: Phosphopantetheine adenylyltransferase (161 aa).

Substrate is bound at residue S8. ATP is bound by residues S8–F9 and H16. Substrate is bound by residues K40, T72, and R86. ATP is bound by residues G87–R89, E97, and H122–S128.

The protein belongs to the bacterial CoaD family. As to quaternary structure, homohexamer. Requires Mg(2+) as cofactor.

The protein resides in the cytoplasm. It catalyses the reaction (R)-4'-phosphopantetheine + ATP + H(+) = 3'-dephospho-CoA + diphosphate. It participates in cofactor biosynthesis; coenzyme A biosynthesis; CoA from (R)-pantothenate: step 4/5. Functionally, reversibly transfers an adenylyl group from ATP to 4'-phosphopantetheine, yielding dephospho-CoA (dPCoA) and pyrophosphate. The sequence is that of Phosphopantetheine adenylyltransferase from Prochlorococcus marinus (strain SARG / CCMP1375 / SS120).